Reading from the N-terminus, the 369-residue chain is Anhydro-N-acetylmuramic acid kinase (369 aa).

12 to 19 contributes to the ATP binding site; sequence GTSLDGVD.

Belongs to the anhydro-N-acetylmuramic acid kinase family.

The catalysed reaction is 1,6-anhydro-N-acetyl-beta-muramate + ATP + H2O = N-acetyl-D-muramate 6-phosphate + ADP + H(+). Its pathway is amino-sugar metabolism; 1,6-anhydro-N-acetylmuramate degradation. It participates in cell wall biogenesis; peptidoglycan recycling. In terms of biological role, catalyzes the specific phosphorylation of 1,6-anhydro-N-acetylmuramic acid (anhMurNAc) with the simultaneous cleavage of the 1,6-anhydro ring, generating MurNAc-6-P. Is required for the utilization of anhMurNAc either imported from the medium or derived from its own cell wall murein, and thus plays a role in cell wall recycling. The protein is Anhydro-N-acetylmuramic acid kinase of Shigella boydii serotype 4 (strain Sb227).